The primary structure comprises 271 residues: Cobalt import ATP-binding protein CbiO (271 aa).

The ABC transporter domain occupies 2–236; it reads LATSDLWFRY…TEAMEHAGLT (235 aa). ATP is bound at residue 34 to 41; that stretch reads GANGCGKS.

The protein belongs to the ABC transporter superfamily. Cobalt importer (TC 3.A.1.18.1) family. Forms an energy-coupling factor (ECF) transporter complex composed of an ATP-binding protein (A component, CbiO), a transmembrane protein (T component, CbiQ) and 2 possible substrate-capture proteins (S components, CbiM and CbiN) of unknown stoichimetry.

The protein resides in the cell inner membrane. It functions in the pathway cofactor biosynthesis; adenosylcobalamin biosynthesis. Its function is as follows. Part of the energy-coupling factor (ECF) transporter complex CbiMNOQ involved in cobalt import. Presumably responsible for energy coupling to the transport system. The polypeptide is Cobalt import ATP-binding protein CbiO (Salmonella paratyphi A (strain ATCC 9150 / SARB42)).